A 158-amino-acid polypeptide reads, in one-letter code: Protein OPG060 (158 aa).

This sequence belongs to the orthopoxvirus OPG058 family.

In Homo sapiens (Human), this protein is Protein OPG060 (OPG060).